A 269-amino-acid chain; its full sequence is Expansin-B9 (269 aa).

An N-terminal signal peptide occupies residues Met1–Cys24. Asn34 carries N-linked (GlcNAc...) asparagine glycosylation. One can recognise an Expansin-like EG45 domain in the interval Gly63–Gly169. Intrachain disulfides connect Cys66/Cys94, Cys97/Cys164, and Cys102/Cys108. The region spanning Asn183–Ser264 is the Expansin-like CBD domain.

It belongs to the expansin family. Expansin B subfamily.

The protein localises to the secreted. The protein resides in the cell wall. It is found in the membrane. In terms of biological role, may cause loosening and extension of plant cell walls by disrupting non-covalent bonding between cellulose microfibrils and matrix glucans. No enzymatic activity has been found. May be required for rapid internodal elongation in deepwater rice during submergence. The sequence is that of Expansin-B9 (EXPB9) from Oryza sativa subsp. japonica (Rice).